We begin with the raw amino-acid sequence, 435 residues long: Cell adhesion molecule 2 (435 aa).

The N-terminal stretch at 1 to 24 is a signal peptide; it reads MIWKRSAVLRFYSVCGLLLQGSQG. At 25–367 the chain is on the extracellular side; it reads QFPLTQNVTV…SLAGQNGPDH (343 aa). Positions 27 to 119 constitute an Ig-like V-type domain; sequence PLTQNVTVVE…PVKTSKAYLT (93 aa). 2 N-linked (GlcNAc...) asparagine glycosylation sites follow: Asn-31 and Asn-51. 3 disulfides stabilise this stretch: Cys-44/Cys-104, Cys-146/Cys-203, and Cys-248/Cys-296. Ig-like C2-type domains lie at 127 to 219 and 227 to 312; these read PQIS…VAMQ and PSVK…YVLI. Asn-291 carries an N-linked (GlcNAc...) asparagine glycan. The span at 337–351 shows a compositional bias: low complexity; that stretch reads SVTITTSPSTSASSS. Residues 337-360 are disordered; it reads SVTITTSPSTSASSSSRRDPNSLA. A helical membrane pass occupies residues 368–388; the sequence is ALIGGIVAVVVFVTLCSIFLL. The Cytoplasmic segment spans residues 389–435; sequence GRYLARHKGTYLTNEAKGAEDAPDADTAIINAEGSQVNAEEKKEYFI. Ser-423 carries the post-translational modification Phosphoserine.

It belongs to the nectin family. In terms of processing, glycosylation at Asn-51 reduces adhesive binding.

Its subcellular location is the cell membrane. The protein localises to the synapse. The protein resides in the cell projection. It is found in the axon. Adhesion molecule that engages in homo- and heterophilic interactions with the other nectin-like family members, leading to cell aggregation. Important for synapse organization, providing regulated trans-synaptic adhesion. Preferentially binds to oligodendrocytes. The chain is Cell adhesion molecule 2 (Cadm2) from Mus musculus (Mouse).